The primary structure comprises 102 residues: Large ribosomal subunit protein bL21 (102 aa).

Belongs to the bacterial ribosomal protein bL21 family. As to quaternary structure, part of the 50S ribosomal subunit. Contacts protein L20.

In terms of biological role, this protein binds to 23S rRNA in the presence of protein L20. This chain is Large ribosomal subunit protein bL21, found in Exiguobacterium sibiricum (strain DSM 17290 / CCUG 55495 / CIP 109462 / JCM 13490 / 255-15).